The primary structure comprises 255 residues: uncharacterized protein (255 aa).

[4Fe-4S] cluster-binding residues include Cys-122 and Cys-160.

As to quaternary structure, homodimer. The cofactor is [4Fe-4S] cluster.

This is an uncharacterized protein from Escherichia coli (strain K12).